The primary structure comprises 265 residues: MDKKTWVYIIIAIIIILLLVWYFRNHMSDQKGVNVNNQTYNMLQQQISSLNQQILFLKQQISNLHVPAPTSTVNSLRQTVSDINQQVSTINNQISSLNPYLPRNQQLELASVLSIFNRNALDLNNISRSVINRDINYFNAGQHGSQVPQNSHTVQNPNVADNELNVLQQKVDNLNGVVSNIRQHLAQFGSGIPESFRDEAEKAASYLNDRIDDINKNLPNLVQRLNPNQRNNLNRILSELNNDLSSLKNSLGSAVRNRINSVNIH.

A helical; Signal-anchor for type II membrane protein membrane pass occupies residues 3–23 (KKTWVYIIIAIIIILLLVWYF). N-linked (GlcNAc...) asparagine; by host glycosylation is found at Asn-37 and Asn-125. A coiled-coil region spans residues 37 to 94 (NQTYNMLQQQISSLNQQILFLKQQISNLHVPAPTSTVNSLRQTVSDINQQVSTINNQI). Residues 158-257 (NVADNELNVL…KNSLGSAVRN (100 aa)) are a coiled coil.

It localises to the host membrane. Its subcellular location is the virion. This is an uncharacterized protein from Acanthamoeba polyphaga (Amoeba).